We begin with the raw amino-acid sequence, 238 residues long: Dephospho-CoA kinase (238 aa).

The region spanning 3–233 (IIGLTGGVGT…QRPFASPPRA (231 aa)) is the DPCK domain. ATP is bound at residue 11–16 (GTGKST). 2 disordered regions span residues 110-129 (HGVP…VGFS) and 219-238 (LASA…YSDG).

The protein belongs to the CoaE family.

Its subcellular location is the cytoplasm. The catalysed reaction is 3'-dephospho-CoA + ATP = ADP + CoA + H(+). The protein operates within cofactor biosynthesis; coenzyme A biosynthesis; CoA from (R)-pantothenate: step 5/5. Catalyzes the phosphorylation of the 3'-hydroxyl group of dephosphocoenzyme A to form coenzyme A. This Synechococcus sp. (strain JA-2-3B'a(2-13)) (Cyanobacteria bacterium Yellowstone B-Prime) protein is Dephospho-CoA kinase.